Here is a 547-residue protein sequence, read N- to C-terminus: MTLTKWALPLFFLFFYLLPLDQRPLWSPDENRYAEISREMVSTGDWVVPHFLGLRYFEKPIAGYWFNSISQQLFGDTNFAVRFASAAATGLSALLIFWFALQLWQCRRKAFLASLIYLSLLIVYGIGTYSVLDAMVTLWLNAAMVSFYIIRKEGSLGSRIGGYLLFGLACGMGFLTKGFIALAVPVVVIVPYVIYQRRLLELVRFGPLAILSAVLLAAPWAIAVHLREPDYWHYFFWVEHIQRFAADNAQHKAPFWYYLPMGLLGTLPWLGLLPGALRKGWQERKISPETLYLLAWVILPLLFFSIAKGKLLTYILPCFAPLAMLMAANAVDLLKEGKERAFKVNAWLNGLFGLICLVVLAVLAFSPSHAVYGEEDQGALAVAMVIFAGWSLLGFIQLKEVSRRWTLSALCPMVLAIGLPWALPQSLIDSKLPERFIEANQAVLMKSGTLLANDVGLASSLAWGTQRSEINLFDSKGEVHYGLGYPDAAGRYVARADFPAWLEQARKNGQVALLMKTDRDGNTGPVPTADETIVSHRLTLLIYHGAQ.

A run of 10 helical transmembrane segments spans residues 83–103, 111–131, 174–194, 205–225, 253–273, 286–306, 311–331, 346–366, 378–398, and 408–428; these read FASAAATGLSALLIFWFALQL, FLASLIYLSLLIVYGIGTYSV, FLTKGFIALAVPVVVIVPYVI, FGPLAILSAVLLAAPWAIAVH, APFWYYLPMGLLGTLPWLGLL, ISPETLYLLAWVILPLLFFSI, LLTYILPCFAPLAMLMAANAV, AWLNGLFGLICLVVLAVLAFS, GALAVAMVIFAGWSLLGFIQL, and SALCPMVLAIGLPWALPQSLI.

The protein belongs to the glycosyltransferase 83 family.

It is found in the cell inner membrane. The catalysed reaction is 4-amino-4-deoxy-alpha-L-arabinopyranosyl di-trans,octa-cis-undecaprenyl phosphate + lipid IVA = lipid IIA + di-trans,octa-cis-undecaprenyl phosphate.. Its pathway is lipopolysaccharide metabolism; 4-amino-4-deoxy-beta-L-arabinose-lipid A biosynthesis. Catalyzes the transfer of the L-Ara4N moiety of the glycolipid undecaprenyl phosphate-alpha-L-Ara4N to lipid A. The modified arabinose is attached to lipid A and is required for resistance to polymyxin and cationic antimicrobial peptides. The sequence is that of Undecaprenyl phosphate-alpha-4-amino-4-deoxy-L-arabinose arabinosyl transferase from Aeromonas hydrophila subsp. hydrophila (strain ATCC 7966 / DSM 30187 / BCRC 13018 / CCUG 14551 / JCM 1027 / KCTC 2358 / NCIMB 9240 / NCTC 8049).